We begin with the raw amino-acid sequence, 104 residues long: Thiosulfate sulfurtransferase PspE (104 aa).

Residues 1-19 (MFKKGLLALALVFSLPVFA) form the signal peptide. Residues 20–104 (AEHWIDVRVP…KDIAMPKVKG (85 aa)) enclose the Rhodanese domain. The active-site Cysteine persulfide intermediate is the C67.

As to quaternary structure, monomer.

Its subcellular location is the periplasm. It carries out the reaction thiosulfate + hydrogen cyanide = thiocyanate + sulfite + 2 H(+). Inhibited by thiosulfate above 100 mM, particularly at low cyanide concentrations (&lt;5 mM). Inhibited by sodium sulfate or sodium chloride at 0.25 M which gives around 50% inhibition of rhodanese activity. Addition of sodium phosphate at the same concentration results in about 65% inhibition. Sulfite strongly inhibits PspE activity (1 mM sodium sulfite resulted in more than 50% inhibition of rhodanese activity). In terms of biological role, the phage shock protein (psp) operon (pspABCDE) may play a significant role in the competition for survival under nutrient- or energy-limited conditions. PspE catalyzes the sulfur-transfer reaction from thiosulfate to cyanide, to form sulfite and thiocyanate. Also able to use dithiol (dithiothreitol) as an alternate sulfur acceptor. Also possesses a very low mercaptopyruvate sulfurtransferase activity. This chain is Thiosulfate sulfurtransferase PspE (pspE), found in Escherichia coli (strain K12).